Consider the following 573-residue polypeptide: Arginine--tRNA ligase (573 aa).

A 'HIGH' region motif is present at residues 122–132; it reads PNLAKEMHVGH.

Belongs to the class-I aminoacyl-tRNA synthetase family. Monomer.

It is found in the cytoplasm. The enzyme catalyses tRNA(Arg) + L-arginine + ATP = L-arginyl-tRNA(Arg) + AMP + diphosphate. In Laribacter hongkongensis (strain HLHK9), this protein is Arginine--tRNA ligase.